The following is a 478-amino-acid chain: Catalase easC (478 aa).

Histidine 54 is an active-site residue. Tyrosine 343 lines the heme pocket. The interval 459-478 is disordered; the sequence is VAEKARPDSPSRAQPGQLRL.

Belongs to the catalase family. It depends on heme as a cofactor.

It participates in alkaloid biosynthesis; ergot alkaloid biosynthesis. Functionally, catalase; part of the gene cluster that mediates the biosynthesis of fungal ergot alkaloid. DmaW catalyzes the first step of ergot alkaloid biosynthesis by condensing dimethylallyl diphosphate (DMAP) and tryptophan to form 4-dimethylallyl-L-tryptophan. The second step is catalyzed by the methyltransferase easF that methylates 4-dimethylallyl-L-tryptophan in the presence of S-adenosyl-L-methionine, resulting in the formation of 4-dimethylallyl-L-abrine. The catalase easC and the FAD-dependent oxidoreductase easE then transform 4-dimethylallyl-L-abrine to chanoclavine-I which is further oxidized by easD in the presence of NAD(+), resulting in the formation of chanoclavine-I aldehyde. Chanoclavine-I aldehyde is the precursor of ergoamides and ergopeptines in Clavicipitaceae, and clavine-type alcaloids such as fumiclavine in Trichocomaceae. However, the metabolites downstream of chanoclavine-I aldehyde in Arthrodermataceae have not been identified yet. This is Catalase easC from Trichophyton verrucosum (strain HKI 0517).